We begin with the raw amino-acid sequence, 237 residues long: Purine nucleoside phosphorylase DeoD-type (237 aa).

A purine D-ribonucleoside is bound at residue His4. Phosphate-binding positions include Gly20, Arg24, Arg43, and 87–90 (RVGT). A purine D-ribonucleoside is bound by residues 179–181 (EME) and 203–204 (SD). The Proton donor role is filled by Asp204.

It belongs to the PNP/UDP phosphorylase family. Homohexamer; trimer of homodimers.

The catalysed reaction is a purine D-ribonucleoside + phosphate = a purine nucleobase + alpha-D-ribose 1-phosphate. The enzyme catalyses a purine 2'-deoxy-D-ribonucleoside + phosphate = a purine nucleobase + 2-deoxy-alpha-D-ribose 1-phosphate. Catalyzes the reversible phosphorolytic breakdown of the N-glycosidic bond in the beta-(deoxy)ribonucleoside molecules, with the formation of the corresponding free purine bases and pentose-1-phosphate. The sequence is that of Purine nucleoside phosphorylase DeoD-type from Streptococcus pyogenes serotype M12 (strain MGAS2096).